The following is a 230-amino-acid chain: N-(5'-phosphoribosyl)anthranilate isomerase (230 aa).

The protein belongs to the TrpF family.

The catalysed reaction is N-(5-phospho-beta-D-ribosyl)anthranilate = 1-(2-carboxyphenylamino)-1-deoxy-D-ribulose 5-phosphate. The protein operates within amino-acid biosynthesis; L-tryptophan biosynthesis; L-tryptophan from chorismate: step 3/5. In Thermosynechococcus vestitus (strain NIES-2133 / IAM M-273 / BP-1), this protein is N-(5'-phosphoribosyl)anthranilate isomerase.